Here is a 300-residue protein sequence, read N- to C-terminus: MKIKKIMHNIFKGLITALITPFKDNKLDLYALERIVKHQIKYEVDAVLIAGSTGESSSLSFEEYKLLLQTSVEIVNKCIPIISGCSSNNTTYARALAAESTKIGVDGFMASPPSYVKPTQHGIYKHFEALHEACNLPIMLYSAPTRSGVDFSDETILRLSKLPRILALKDCGVDLERPLRIRATVKKDFNILTGNDEVVLAFNAQGGVGWTSVASNIVPNICKELLEKWNKNDTKGALEIHQKLLPLYTALFVESNPIPIKYAAHYLGLCENEIRPPLTEASDSAKKQIENIITSLSIKI.

Thr-53 is a binding site for pyruvate. Catalysis depends on Tyr-141, which acts as the Proton donor/acceptor. Catalysis depends on Lys-169, which acts as the Schiff-base intermediate with substrate. Position 211 (Thr-211) interacts with pyruvate.

This sequence belongs to the DapA family. In terms of assembly, homotetramer; dimer of dimers.

Its subcellular location is the cytoplasm. It carries out the reaction L-aspartate 4-semialdehyde + pyruvate = (2S,4S)-4-hydroxy-2,3,4,5-tetrahydrodipicolinate + H2O + H(+). It participates in amino-acid biosynthesis; L-lysine biosynthesis via DAP pathway; (S)-tetrahydrodipicolinate from L-aspartate: step 3/4. Catalyzes the condensation of (S)-aspartate-beta-semialdehyde [(S)-ASA] and pyruvate to 4-hydroxy-tetrahydrodipicolinate (HTPA). The polypeptide is 4-hydroxy-tetrahydrodipicolinate synthase (Rickettsia massiliae (strain Mtu5)).